Consider the following 483-residue polypeptide: uncharacterized protein (483 aa).

The WD repeat unit spans residues 96–137; sequence IQCDQDPLSSISWSPSGELLLWSSFDSKITVWSLNTQKGYLL.

This is an uncharacterized protein from Schizosaccharomyces pombe (strain 972 / ATCC 24843) (Fission yeast).